A 73-amino-acid polypeptide reads, in one-letter code: MRITYPSIDKLLDEVDSRYSLSVLAAKRAGELEAGKPGALDNYHNLKPVGQALEEIAAGKVTIDADPHGEADE.

The protein belongs to the RNA polymerase subunit omega family. As to quaternary structure, the RNAP catalytic core consists of 2 alpha, 1 beta, 1 beta' and 1 omega subunit. When a sigma factor is associated with the core the holoenzyme is formed, which can initiate transcription.

The catalysed reaction is RNA(n) + a ribonucleoside 5'-triphosphate = RNA(n+1) + diphosphate. Functionally, promotes RNA polymerase assembly. Latches the N- and C-terminal regions of the beta' subunit thereby facilitating its interaction with the beta and alpha subunits. In Lactobacillus delbrueckii subsp. bulgaricus (strain ATCC BAA-365 / Lb-18), this protein is DNA-directed RNA polymerase subunit omega.